The chain runs to 303 residues: N-acetyl-D-glucosamine kinase (303 aa).

ATP-binding positions include 4–11 (GFDIGGTK) and 133–140 (GVGGGLVL). The Zn(2+) site is built by His-157, Cys-177, Cys-179, and Cys-184.

This sequence belongs to the ROK (NagC/XylR) family. NagK subfamily.

It carries out the reaction N-acetyl-D-glucosamine + ATP = N-acetyl-D-glucosamine 6-phosphate + ADP + H(+). Its pathway is cell wall biogenesis; peptidoglycan recycling. Functionally, catalyzes the phosphorylation of N-acetyl-D-glucosamine (GlcNAc) derived from cell-wall degradation, yielding GlcNAc-6-P. This Salmonella newport (strain SL254) protein is N-acetyl-D-glucosamine kinase.